The primary structure comprises 328 residues: MAKHVKVAVTGAAGQIGYALLFRLASGQAFGLDTTVDLHLLEIEPALPALKGVVMELEDCAFPLLRNMVVTSDPRVAFNDVNWALLVGAAPRKAGMERKDLLEKNGSIFAGQGKAINENAASDVRIFVVGNPCNTNCLIAMNNAPDIPKDRFYAMTRLDQNRAIGQLALKAGVDVPSVKNMIIWGNHSSTQYPDFYHATIDGKPATEVIRDKNWLLNDFIPVIQQRGAAVIKARGASSAASAANAALDSVWSLINTTPADDNYSVALCAQGQYGVDEGLIFSFPCRTENGVVSVIEEIEHNEFGQQKLKETLDELREERDAVEALGLI.

11–17 (GAAGQIG) contributes to the NAD(+) binding site. Substrate is bound by residues Arg-92 and Arg-98. Residues Asn-105, Gln-112, and 129 to 131 (VGN) contribute to the NAD(+) site. 2 residues coordinate substrate: Asn-131 and Arg-162. The active-site Proton acceptor is the His-187.

It belongs to the LDH/MDH superfamily. MDH type 2 family.

It catalyses the reaction (S)-malate + NAD(+) = oxaloacetate + NADH + H(+). Catalyzes the reversible oxidation of malate to oxaloacetate. The sequence is that of Malate dehydrogenase from Coxiella burnetii (strain CbuK_Q154) (Coxiella burnetii (strain Q154)).